Consider the following 408-residue polypeptide: Homogentisate geranylgeranyltransferase (408 aa).

A chloroplast-targeting transit peptide spans 1-62 (MQAVTAAAAA…TVMHKFSAIS (62 aa)). 9 helical membrane passes run 122-142 (HTIF…MKSI), 156-176 (ALTA…LYDI), 194-214 (SVAT…SIGI), 221-241 (LMCA…EAPF), 248-268 (ALLA…LAFF), 286-306 (LVFA…FKDI), 329-349 (VYQL…LVGA), 352-372 (TNLF…LTLW), and 386-406 (VTSF…LIPF).

It belongs to the UbiA prenyltransferase family. As to expression, expressed in seeds.

It is found in the plastid. The protein localises to the chloroplast membrane. The catalysed reaction is homogentisate + (2E,6E,10E)-geranylgeranyl diphosphate + H(+) = 6-geranylgeranyl-2-methylbenzene-1,4-diol + CO2 + diphosphate. It functions in the pathway cofactor biosynthesis; tocopherol biosynthesis. Its function is as follows. Involved in the synthesis of tocotrienol (vitamin E). Catalyzes the condensation of homogentisate and geranylgeranyl diphosphate to form 2-methyl-6-geranylgeranylbenzoquinol. Possesses low activity with phytyl diphosphate as substrate. In Hordeum vulgare (Barley), this protein is Homogentisate geranylgeranyltransferase.